The sequence spans 109 residues: Nucleoid-associated protein Swoo_1794 (109 aa).

Residues 88–109 (QKDKMAEVTGGMQLPPGMKMPF) form a disordered region.

Belongs to the YbaB/EbfC family. In terms of assembly, homodimer.

The protein resides in the cytoplasm. It localises to the nucleoid. Functionally, binds to DNA and alters its conformation. May be involved in regulation of gene expression, nucleoid organization and DNA protection. This Shewanella woodyi (strain ATCC 51908 / MS32) protein is Nucleoid-associated protein Swoo_1794.